Consider the following 61-residue polypeptide: Delta-actitoxin-Avd2c (61 aa).

The N-terminal stretch at 1–20 (MMNRLLVFLMLGAFMLVVSA) is a signal peptide. Positions 21 to 31 (NDAYGGDESLG) are excised as a propeptide. Cystine bridges form between Cys36-Cys51, Cys37-Cys45, and Cys39-Cys56.

Belongs to the sea anemone short toxin (type III) family.

The protein resides in the secreted. The protein localises to the nematocyst. Functionally, sodium channel inhibitor. 5 uM completely inhibits voltage-gated sodium channel (Nav) inactivation. The sequence is that of Delta-actitoxin-Avd2c from Anemonia viridis (Snakelocks anemone).